The following is an 89-amino-acid chain: Small ribosomal subunit protein uS15 (89 aa).

Belongs to the universal ribosomal protein uS15 family. Part of the 30S ribosomal subunit. Forms a bridge to the 50S subunit in the 70S ribosome, contacting the 23S rRNA.

Its function is as follows. One of the primary rRNA binding proteins, it binds directly to 16S rRNA where it helps nucleate assembly of the platform of the 30S subunit by binding and bridging several RNA helices of the 16S rRNA. Forms an intersubunit bridge (bridge B4) with the 23S rRNA of the 50S subunit in the ribosome. The chain is Small ribosomal subunit protein uS15 from Trichormus variabilis (strain ATCC 29413 / PCC 7937) (Anabaena variabilis).